A 171-amino-acid polypeptide reads, in one-letter code: Large ribosomal subunit protein uL24 (171 aa).

Residues M1–K124 are large ribosomal subunit protein uL24. Residues G108–K171 form a disordered region. The interval V125–K171 is unknown.

It belongs to the universal ribosomal protein uL24 family. Part of the 50S ribosomal subunit.

One of two assembly initiator proteins, it binds directly to the 5'-end of the 23S rRNA, where it nucleates assembly of the 50S subunit. Functionally, one of the proteins that surrounds the polypeptide exit tunnel on the outside of the subunit. The sequence is that of Large ribosomal subunit protein uL24 from Acholeplasma laidlawii (strain PG-8A).